A 179-amino-acid chain; its full sequence is ATP synthase subunit delta (179 aa).

The protein belongs to the ATPase delta chain family. In terms of assembly, F-type ATPases have 2 components, F(1) - the catalytic core - and F(0) - the membrane proton channel. F(1) has five subunits: alpha(3), beta(3), gamma(1), delta(1), epsilon(1). F(0) has three main subunits: a(1), b(2) and c(10-14). The alpha and beta chains form an alternating ring which encloses part of the gamma chain. F(1) is attached to F(0) by a central stalk formed by the gamma and epsilon chains, while a peripheral stalk is formed by the delta and b chains.

Its subcellular location is the cell membrane. Its function is as follows. F(1)F(0) ATP synthase produces ATP from ADP in the presence of a proton or sodium gradient. F-type ATPases consist of two structural domains, F(1) containing the extramembraneous catalytic core and F(0) containing the membrane proton channel, linked together by a central stalk and a peripheral stalk. During catalysis, ATP synthesis in the catalytic domain of F(1) is coupled via a rotary mechanism of the central stalk subunits to proton translocation. This protein is part of the stalk that links CF(0) to CF(1). It either transmits conformational changes from CF(0) to CF(1) or is implicated in proton conduction. This chain is ATP synthase subunit delta, found in Clostridium acetobutylicum (strain ATCC 824 / DSM 792 / JCM 1419 / IAM 19013 / LMG 5710 / NBRC 13948 / NRRL B-527 / VKM B-1787 / 2291 / W).